Reading from the N-terminus, the 334-residue chain is Beta-ketoacyl-[acyl-carrier-protein] synthase III (334 aa).

Active-site residues include Cys-116 and His-256. The ACP-binding stretch occupies residues 257-261 (QANLR). The active site involves Asn-286.

This sequence belongs to the thiolase-like superfamily. FabH family. Homodimer.

Its subcellular location is the cytoplasm. The catalysed reaction is malonyl-[ACP] + acetyl-CoA + H(+) = 3-oxobutanoyl-[ACP] + CO2 + CoA. The protein operates within lipid metabolism; fatty acid biosynthesis. Its function is as follows. Catalyzes the condensation reaction of fatty acid synthesis by the addition to an acyl acceptor of two carbons from malonyl-ACP. Catalyzes the first condensation reaction which initiates fatty acid synthesis and may therefore play a role in governing the total rate of fatty acid production. Possesses both acetoacetyl-ACP synthase and acetyl transacylase activities. Its substrate specificity determines the biosynthesis of branched-chain and/or straight-chain of fatty acids. The protein is Beta-ketoacyl-[acyl-carrier-protein] synthase III of Phocaeicola vulgatus (strain ATCC 8482 / DSM 1447 / JCM 5826 / CCUG 4940 / NBRC 14291 / NCTC 11154) (Bacteroides vulgatus).